The sequence spans 448 residues: Leukocyte immunoglobulin-like receptor subfamily B member 4 (448 aa).

A signal peptide spans 1-21; it reads MIPTFTALLCLGLSLGPRTHM. At 22–259 the chain is on the extracellular side; sequence QAGPLPKPTL…PHSGLRRHWE (238 aa). Ig-like C2-type domains are found at residues 27 to 118 and 124 to 218; these read PKPT…LVMT and PTLS…LIVS. 2 disulfide bridges follow: Cys49–Cys98 and Cys144–Cys195. The disordered stretch occupies residues 217–248; that stretch reads VSGSLEDPRPSPTRSVSTAAGPEDQPLMPTGS. The helical transmembrane segment at 260–280 threads the bilayer; that stretch reads VLIGVLVVSILLLSLLLFLLL. At 281 to 448 the chain is on the cytoplasmic side; it reads QHWRQGKHRT…PSVYATLAIH (168 aa). Residues 297–448 form a disordered region; that stretch reads DFQRPPGAAE…PSVYATLAIH (152 aa). Ser319 is modified (phosphoserine). Over residues 344-354 the composition is skewed to basic and acidic residues; it reads MDTRQSPHDED. The short motif at 358–363 is the ITIM motif 1 element; that stretch reads VTYAKV. Basic and acidic residues predominate over residues 384 to 398; it reads LDTKDRQAEEDRQMD. Short sequence motifs (ITIM motif) lie at residues 410-415 and 440-445; these read VTYAQL and SVYATL.

As to quaternary structure, interacts with PTPN6. In terms of tissue distribution, detected on monocytes, macrophages, dendritic cells, natural killer cells and B-cells (at protein level). Expressed in the lung.

It is found in the cell membrane. In terms of biological role, inhibitory receptor involved in the down-regulation of the immune response and the development of immune tolerance. Receptor for FN1. Receptor for apolipoprotein APOE. Receptor for ALCAM/CD166. Inhibits receptor-mediated phosphorylation of cellular proteins and mobilization of intracellular calcium ions. Inhibits FCGR1A/CD64-mediated monocyte activation by inducing phosphatase-mediated down-regulation of the phosphorylation of multiple proteins including LCK, SYK, LAT and ERK, leading to a reduction in TNF production. This inhibition of monocyte activation occurs at least in part via binding to FN1. Inhibits T cell proliferation, inducing anergy, suppressing the differentiation of IFNG-producing CD8+ cytotoxic T cells and enhancing the generation of CD8+ T suppressor cells. Induces up-regulation of CD86 on dendritic cells. Interferes with TNFRSF5-signaling and NF-kappa-B up-regulation. This chain is Leukocyte immunoglobulin-like receptor subfamily B member 4 (LILRB4), found in Homo sapiens (Human).